Here is a 145-residue protein sequence, read N- to C-terminus: Superoxide dismutase [Mn/Fe] (145 aa).

Positions 10 and 64 each coordinate Fe(3+). Residues His10 and His64 each contribute to the Mn(2+) site.

Belongs to the iron/manganese superoxide dismutase family. Requires Mn(2+) as cofactor. It depends on Fe(3+) as a cofactor.

The catalysed reaction is 2 superoxide + 2 H(+) = H2O2 + O2. Destroys superoxide anion radicals which are normally produced within the cells and which are toxic to biological systems. Catalyzes the dismutation of superoxide anion radicals into O2 and H2O2 by successive reduction and oxidation of the transition metal ion at the active site. The protein is Superoxide dismutase [Mn/Fe] (sodA) of Streptococcus parasanguinis.